We begin with the raw amino-acid sequence, 620 residues long: 1-deoxy-D-xylulose-5-phosphate synthase (620 aa).

Thiamine diphosphate contacts are provided by residues H80 and 121–123 (GHS). Mg(2+) is bound at residue D152. Thiamine diphosphate contacts are provided by residues 153–154 (GA), N181, Y288, and E370. Residue N181 participates in Mg(2+) binding.

It belongs to the transketolase family. DXPS subfamily. In terms of assembly, homodimer. The cofactor is Mg(2+). It depends on thiamine diphosphate as a cofactor.

It catalyses the reaction D-glyceraldehyde 3-phosphate + pyruvate + H(+) = 1-deoxy-D-xylulose 5-phosphate + CO2. Its pathway is metabolic intermediate biosynthesis; 1-deoxy-D-xylulose 5-phosphate biosynthesis; 1-deoxy-D-xylulose 5-phosphate from D-glyceraldehyde 3-phosphate and pyruvate: step 1/1. Functionally, catalyzes the acyloin condensation reaction between C atoms 2 and 3 of pyruvate and glyceraldehyde 3-phosphate to yield 1-deoxy-D-xylulose-5-phosphate (DXP). The sequence is that of 1-deoxy-D-xylulose-5-phosphate synthase from Escherichia fergusonii (strain ATCC 35469 / DSM 13698 / CCUG 18766 / IAM 14443 / JCM 21226 / LMG 7866 / NBRC 102419 / NCTC 12128 / CDC 0568-73).